A 370-amino-acid chain; its full sequence is Ubiquinone biosynthesis O-methyltransferase, mitochondrial (370 aa).

The transit peptide at 1–86 (MWGGSKLSSS…SYRLPWTRPY (86 aa)) directs the protein to the mitochondrion. Position 125 (Arg125) interacts with S-adenosyl-L-methionine. Residues Lys144 and Lys150 each carry the N6-acetyllysine modification. S-adenosyl-L-methionine-binding residues include Gly155 and Asp176. At Lys197 the chain carries N6-acetyllysine. Position 223 (Ser223) interacts with S-adenosyl-L-methionine. Positions 224, 227, and 228 each coordinate Mg(2+).

This sequence belongs to the class I-like SAM-binding methyltransferase superfamily. UbiG/COQ3 family. Component of a multi-subunit COQ enzyme complex, composed of at least COQ3, COQ4, COQ5, COQ6, COQ7 and COQ9. Mg(2+) serves as cofactor.

It localises to the mitochondrion inner membrane. The catalysed reaction is 3,4-dihydroxy-5-(all-trans-decaprenyl)benzoate + S-adenosyl-L-methionine = 4-hydroxy-3-methoxy-5-(all-trans-decaprenyl)benzoate + S-adenosyl-L-homocysteine + H(+). It catalyses the reaction a 3-demethylubiquinone + S-adenosyl-L-methionine = a ubiquinone + S-adenosyl-L-homocysteine. It carries out the reaction 3-demethylubiquinol-10 + S-adenosyl-L-methionine = ubiquinol-10 + S-adenosyl-L-homocysteine + H(+). It functions in the pathway cofactor biosynthesis; ubiquinone biosynthesis. In terms of biological role, O-methyltransferase required for two non-consecutive steps during ubiquinone biosynthesis. Catalyzes the 2 O-methylation of 3,4-dihydroxy-5-(all-trans-decaprenyl)benzoic acid into 4-hydroxy-3-methoxy-5-(all-trans-decaprenyl)benzoic acid. Also catalyzes the last step of ubiquinone biosynthesis by mediating methylation of 3-demethylubiquinone into ubiquinone. Also able to mediate the methylation of 3-demethylubiquinol-10 into ubiquinol-10. The protein is Ubiquinone biosynthesis O-methyltransferase, mitochondrial of Bos taurus (Bovine).